We begin with the raw amino-acid sequence, 363 residues long: MRTTPIRVLVVDDSALMRKMITQMLQKDPAIEVIGTAMDGAFGLKKIEELRPDVVTLDLEMPNMDGMEMLRHITKRGQTPVIVVSAHTTQGARETFKALQLGAFDFVAKPQEGSSLTLENVADEIIAKIKVAGAARKPRPQIATVDEALLRSARKPARPPVASRTTPSKIIAIGISTGGPNALLFMLSQLPADFAGTILIVQHMPEGFTQMFSNRLAESCAIEVKEAASGDLLLAGRALICPGNRHMRVRRMPMGDVVVLSDEPPVNGHRPSADVLFRSVAQEFGPKVVALIMTGMGEDGADAIGAVKAAGGLAVAQDEGSSVVFGMPKVAIERGNVNRVVALDALPNLLMVQSAAQRVSSFD.

Residues 7–124 (RVLVVDDSAL…SLTLENVADE (118 aa)) enclose the Response regulatory domain. Asp-58 bears the 4-aspartylphosphate mark. The region spanning 160-357 (PVASRTTPSK…NLLMVQSAAQ (198 aa)) is the CheB-type methylesterase domain. Residues Ser-176, His-203, and Asp-299 contribute to the active site.

The protein belongs to the CheB family. In terms of processing, phosphorylated by CheA. Phosphorylation of the N-terminal regulatory domain activates the methylesterase activity.

The protein localises to the cytoplasm. The enzyme catalyses [protein]-L-glutamate 5-O-methyl ester + H2O = L-glutamyl-[protein] + methanol + H(+). It catalyses the reaction L-glutaminyl-[protein] + H2O = L-glutamyl-[protein] + NH4(+). In terms of biological role, involved in chemotaxis. Part of a chemotaxis signal transduction system that modulates chemotaxis in response to various stimuli. Catalyzes the demethylation of specific methylglutamate residues introduced into the chemoreceptors (methyl-accepting chemotaxis proteins or MCP) by CheR. Also mediates the irreversible deamidation of specific glutamine residues to glutamic acid. This is Protein-glutamate methylesterase/protein-glutamine glutaminase 2 from Koribacter versatilis (strain Ellin345).